A 114-amino-acid polypeptide reads, in one-letter code: Ribonuclease P protein component (114 aa).

Belongs to the RnpA family. Consists of a catalytic RNA component (M1 or rnpB) and a protein subunit.

It catalyses the reaction Endonucleolytic cleavage of RNA, removing 5'-extranucleotides from tRNA precursor.. Functionally, RNaseP catalyzes the removal of the 5'-leader sequence from pre-tRNA to produce the mature 5'-terminus. It can also cleave other RNA substrates such as 4.5S RNA. The protein component plays an auxiliary but essential role in vivo by binding to the 5'-leader sequence and broadening the substrate specificity of the ribozyme. The polypeptide is Ribonuclease P protein component (Clostridioides difficile (strain 630) (Peptoclostridium difficile)).